Consider the following 181-residue polypeptide: ATP synthase subunit delta (181 aa).

This sequence belongs to the ATPase delta chain family. F-type ATPases have 2 components, F(1) - the catalytic core - and F(0) - the membrane proton channel. F(1) has five subunits: alpha(3), beta(3), gamma(1), delta(1), epsilon(1). F(0) has three main subunits: a(1), b(2) and c(10-14). The alpha and beta chains form an alternating ring which encloses part of the gamma chain. F(1) is attached to F(0) by a central stalk formed by the gamma and epsilon chains, while a peripheral stalk is formed by the delta and b chains.

The protein localises to the cell inner membrane. F(1)F(0) ATP synthase produces ATP from ADP in the presence of a proton or sodium gradient. F-type ATPases consist of two structural domains, F(1) containing the extramembraneous catalytic core and F(0) containing the membrane proton channel, linked together by a central stalk and a peripheral stalk. During catalysis, ATP synthesis in the catalytic domain of F(1) is coupled via a rotary mechanism of the central stalk subunits to proton translocation. Functionally, this protein is part of the stalk that links CF(0) to CF(1). It either transmits conformational changes from CF(0) to CF(1) or is implicated in proton conduction. The polypeptide is ATP synthase subunit delta (Blochmanniella pennsylvanica (strain BPEN)).